A 202-amino-acid polypeptide reads, in one-letter code: MTAIGEVENPTVVQRPTEASKVKEQAPATDKKPRAPKEKKPKSAKAVTHPPYFQMIKEALLALNEKGGSSPYAVAKYMEDKHKDELPANFRKILGLQLKNSAAKGKLIKIKASYKLSEAGKKETTTKTSTKKLPKADSKKKPRSTRATATAAKKTEVPKKAKATPKPKKVGAKRTRKSTPAKAKQPKSIKSPAAKRAKKIAV.

2 disordered regions span residues 1–50 (MTAI…VTHP) and 114–202 (YKLS…KIAV). Over residues 18–38 (EASKVKEQAPATDKKPRAPKE) the composition is skewed to basic and acidic residues. An H15 domain is found at 48–118 (THPPYFQMIK…KIKASYKLSE (71 aa)). Basic residues predominate over residues 160-202 (KAKATPKPKKVGAKRTRKSTPAKAKQPKSIKSPAAKRAKKIAV).

The protein belongs to the histone H1/H5 family.

It is found in the nucleus. It localises to the chromosome. Functionally, histones H1 are necessary for the condensation of nucleosome chains into higher-order structures. The chain is Histone H1 from Solanum pennellii (Tomato).